The following is a 253-amino-acid chain: Imidazole glycerol phosphate synthase subunit HisF (253 aa).

Active-site residues include Asp11 and Asp130.

It belongs to the HisA/HisF family. As to quaternary structure, heterodimer of HisH and HisF.

The protein resides in the cytoplasm. It catalyses the reaction 5-[(5-phospho-1-deoxy-D-ribulos-1-ylimino)methylamino]-1-(5-phospho-beta-D-ribosyl)imidazole-4-carboxamide + L-glutamine = D-erythro-1-(imidazol-4-yl)glycerol 3-phosphate + 5-amino-1-(5-phospho-beta-D-ribosyl)imidazole-4-carboxamide + L-glutamate + H(+). Its pathway is amino-acid biosynthesis; L-histidine biosynthesis; L-histidine from 5-phospho-alpha-D-ribose 1-diphosphate: step 5/9. Functionally, IGPS catalyzes the conversion of PRFAR and glutamine to IGP, AICAR and glutamate. The HisF subunit catalyzes the cyclization activity that produces IGP and AICAR from PRFAR using the ammonia provided by the HisH subunit. In Acetivibrio thermocellus (strain ATCC 27405 / DSM 1237 / JCM 9322 / NBRC 103400 / NCIMB 10682 / NRRL B-4536 / VPI 7372) (Clostridium thermocellum), this protein is Imidazole glycerol phosphate synthase subunit HisF.